Here is a 91-residue protein sequence, read N- to C-terminus: UPF0298 protein OB1449 (91 aa).

This sequence belongs to the UPF0298 family.

The protein localises to the cytoplasm. The protein is UPF0298 protein OB1449 of Oceanobacillus iheyensis (strain DSM 14371 / CIP 107618 / JCM 11309 / KCTC 3954 / HTE831).